We begin with the raw amino-acid sequence, 34 residues long: Photosystem II reaction center protein M (34 aa).

The chain crosses the membrane as a helical span at residues 5–25 (ILAFIATALFILIPTAFSLIL).

Belongs to the PsbM family. PSII is composed of 1 copy each of membrane proteins PsbA, PsbB, PsbC, PsbD, PsbE, PsbF, PsbH, PsbI, PsbJ, PsbK, PsbL, PsbM, PsbT, PsbX, PsbY, PsbZ, Psb30/Ycf12, at least 3 peripheral proteins of the oxygen-evolving complex and a large number of cofactors. It forms dimeric complexes.

It localises to the plastid. It is found in the chloroplast thylakoid membrane. In terms of biological role, one of the components of the core complex of photosystem II (PSII). PSII is a light-driven water:plastoquinone oxidoreductase that uses light energy to abstract electrons from H(2)O, generating O(2) and a proton gradient subsequently used for ATP formation. It consists of a core antenna complex that captures photons, and an electron transfer chain that converts photonic excitation into a charge separation. This subunit is found at the monomer-monomer interface. This Huperzia lucidula (Shining clubmoss) protein is Photosystem II reaction center protein M.